A 178-amino-acid polypeptide reads, in one-letter code: Endoribonuclease YbeY (178 aa).

3 residues coordinate Zn(2+): His118, His122, and His128.

The protein belongs to the endoribonuclease YbeY family. Zn(2+) serves as cofactor.

The protein resides in the cytoplasm. Functionally, single strand-specific metallo-endoribonuclease involved in late-stage 70S ribosome quality control and in maturation of the 3' terminus of the 16S rRNA. The protein is Endoribonuclease YbeY of Mycobacterium leprae (strain Br4923).